Here is a 209-residue protein sequence, read N- to C-terminus: Ribosomal RNA large subunit methyltransferase E (209 aa).

Residues G63, W65, D83, D99, and D124 each coordinate S-adenosyl-L-methionine. The active-site Proton acceptor is the K164.

It belongs to the class I-like SAM-binding methyltransferase superfamily. RNA methyltransferase RlmE family.

The protein localises to the cytoplasm. The enzyme catalyses uridine(2552) in 23S rRNA + S-adenosyl-L-methionine = 2'-O-methyluridine(2552) in 23S rRNA + S-adenosyl-L-homocysteine + H(+). Its function is as follows. Specifically methylates the uridine in position 2552 of 23S rRNA at the 2'-O position of the ribose in the fully assembled 50S ribosomal subunit. The protein is Ribosomal RNA large subunit methyltransferase E of Yersinia enterocolitica serotype O:8 / biotype 1B (strain NCTC 13174 / 8081).